The primary structure comprises 296 residues: tRNA dimethylallyltransferase (296 aa).

9 to 16 (GTTASGKS) lines the ATP pocket. Substrate is bound at residue 11-16 (TASGKS). The segment at 34 to 37 (DSLA) is interaction with substrate tRNA.

This sequence belongs to the IPP transferase family. As to quaternary structure, monomer. Requires Mg(2+) as cofactor.

The catalysed reaction is adenosine(37) in tRNA + dimethylallyl diphosphate = N(6)-dimethylallyladenosine(37) in tRNA + diphosphate. Its function is as follows. Catalyzes the transfer of a dimethylallyl group onto the adenine at position 37 in tRNAs that read codons beginning with uridine, leading to the formation of N6-(dimethylallyl)adenosine (i(6)A). This is tRNA dimethylallyltransferase from Campylobacter curvus (strain 525.92).